The sequence spans 442 residues: MKIPSHRQLAIQYNVNRVTIIKSIELLEAEGFIYTKVGSGTYVNDYLNEAHITNKWSEMMLWSSQQRSQYTVQLINKIETDDSYIHISKGELGISLMPHIQLKKAMSNTASHIEDLSFGYNNGYGYIKLRDIIVERMSKQGINVGRENVMITSGALHAIQLLSIGFLGQDAIIISNTPSYIHSTNVFEQLNFRHIDVPYNQINEIDTIIDRFINFKNKAIYIEPRFNNPTGRSLTNEQKKNIITYSERHNIPIIEDDIFRDIFFSDPTPSIKTYDKLGKVIHISSFSKTIAPAIRIGWIVASEKIIEQLADVRMQIDYGSSILSQMVVYEMLKNKSYDKHLVKLRYVLKDKRDFMLNILNNLFKDIAHWEVPSGGYFVWLVFKIDIDIKYLFYELLSKEKILINPGYIYGSKEKSIRLSFAFESNENIKHALYKIYTYVKKV.

Residues 2-46 (KIPSHRQLAIQYNVNRVTIIKSIELLEAEGFIYTKVGSGTYVNDY) form the HTH gntR-type domain. The H-T-H motif DNA-binding region spans 6 to 25 (HRQLAIQYNVNRVTIIKSIE). K288 is subject to N6-(pyridoxal phosphate)lysine.

The protein in the C-terminal section; belongs to the class-I pyridoxal-phosphate-dependent aminotransferase family. Pyridoxal 5'-phosphate serves as cofactor.

In terms of biological role, positively regulates the expression of the NorB efflux pump and negatively regulates the expression of the AbcA efflux pump. Binds specifically to the promoters of norA, norB and norC and abcA genes. Could also have an aminotransferase activity. In Staphylococcus aureus (strain USA300), this protein is HTH-type transcriptional regulator NorG (norG).